Reading from the N-terminus, the 754-residue chain is Nitrate reductase (754 aa).

A signal peptide (tat-type signal) is located at residues methionine 1–lysine 31. Positions alanine 39 to glutamate 95 constitute a 4Fe-4S Mo/W bis-MGD-type domain. Cysteine 46, cysteine 49, cysteine 53, and cysteine 81 together coordinate [4Fe-4S] cluster. Mo-bis(molybdopterin guanine dinucleotide) is bound by residues lysine 83, glutamine 144, asparagine 169, cysteine 173, glycine 256–aspartate 258, methionine 341, glutamine 345, asparagine 451, lysine 497, aspartate 524, threonine 642–threonine 651, asparagine 728, and lysine 745.

The protein belongs to the prokaryotic molybdopterin-containing oxidoreductase family. NasA/NapA/NarB subfamily. As to quaternary structure, component of the nitrate reductase NapAB complex composed of NapA and NapB. It depends on [4Fe-4S] cluster as a cofactor. Mo-bis(molybdopterin guanine dinucleotide) serves as cofactor. Post-translationally, predicted to be exported by the Tat system. The position of the signal peptide cleavage has not been experimentally proven.

The protein localises to the secreted. It carries out the reaction 2 Fe(II)-[cytochrome] + nitrate + 2 H(+) = 2 Fe(III)-[cytochrome] + nitrite + H2O. Its function is as follows. Catalytic subunit of the nitrate reductase complex NapAB. Receives electrons from NapB and catalyzes the reduction of nitrate to nitrite. This Symbiobacterium thermophilum (strain DSM 24528 / JCM 14929 / IAM 14863 / T) protein is Nitrate reductase.